Consider the following 795-residue polypeptide: Serine/threonine-protein kinase MARK1 (795 aa).

The disordered stretch occupies residues 1-41; it reads MSARTPLPTVNERDTENHTSVDGYTETHIPPAKSSSRQNLP. The residue at position 5 (threonine 5) is a Phosphothreonine. In terms of domain architecture, Protein kinase spans 60-311; the sequence is YRLQKTIGKG…LEQIMKDRWM (252 aa). Residues 66–74 and lysine 89 contribute to the ATP site; that span reads IGKGNFAKV. Aspartate 182 (proton acceptor) is an active-site residue. Threonine 208 bears the Phosphothreonine mark. Threonine 215 carries the phosphothreonine; by LKB1 and TAOK1 modification. Serine 219 carries the post-translational modification Phosphoserine; by GSK3-beta. The UBA domain occupies 329-370; the sequence is DLSDAKRIDIMVTMGFARDEINDALVSQKYDEVMATYILLGR. Disordered stretches follow at residues 377-498 and 518-699; these read GGES…SGGS and QNGR…KPRS. Phosphoserine occurs at positions 382, 390, 393, 403, 423, and 444. Polar residues predominate over residues 387–403; the sequence is CQRSRPSSDLNNSTLQS. A compositionally biased stretch (basic and acidic residues) spans 447–459; sequence SEQKEEWGKDTAR. The span at 462–473 shows a compositional bias: polar residues; that stretch reads GSTTVGSKSEVT. Serine 475 is subject to Phosphoserine. Over residues 486-495 the composition is skewed to polar residues; the sequence is TASPSNNVYS. Composition is skewed to low complexity over residues 523-547 and 585-599; these read SSLTEMSASSMSSAGSTVASAGPSA and PAASPSAHSISASTP. Serine 588 carries the phosphoserine modification. Threonine 613 is modified (phosphothreonine; by PKC/PRKCZ). A compositionally biased stretch (polar residues) spans 647 to 657; it reads GTSTGIISKIT. Basic and acidic residues-rich tracts occupy residues 661-676 and 683-697; these read VRRDPSEGEASGRADT and DPKERDKDEGKEAKP. Serine 666 carries the post-translational modification Phosphoserine. Positions 746-795 constitute a KA1 domain; that stretch reads DARQDSLVQWEMEVCKLPRLSLNGVRFKRISGTSIAFKNIASKIANELKL.

Belongs to the protein kinase superfamily. CAMK Ser/Thr protein kinase family. SNF1 subfamily. In terms of assembly, interacts with MAPT/TAU. It depends on Mg(2+) as a cofactor. Post-translationally, phosphorylated at Thr-215 by STK11/LKB1 in complex with STE20-related adapter-alpha (STRADA) pseudo kinase and CAB39. Phosphorylation at Thr-215 by TAOK1 activates the kinase activity, leading to phosphorylation and detachment of MAPT/TAU from microtubules. Phosphorylation at Ser-219 by GSK3-beta (GSK3B) inhibits the kinase activity. Phosphorylation at Thr-613 by PRKCZ/aPKC in polarized epithelial cells inhibits the kinase activity.

Its subcellular location is the cell membrane. It localises to the cytoplasm. The protein localises to the cytoskeleton. It is found in the cell projection. The protein resides in the dendrite. The catalysed reaction is L-seryl-[protein] + ATP = O-phospho-L-seryl-[protein] + ADP + H(+). It carries out the reaction L-threonyl-[protein] + ATP = O-phospho-L-threonyl-[protein] + ADP + H(+). It catalyses the reaction L-seryl-[tau protein] + ATP = O-phospho-L-seryl-[tau protein] + ADP + H(+). The enzyme catalyses L-threonyl-[tau protein] + ATP = O-phospho-L-threonyl-[tau protein] + ADP + H(+). Its activity is regulated as follows. Inhibited by phosphorylation at Ser-219. Activated by phosphorylation on Thr-215. Functionally, serine/threonine-protein kinase. Involved in cell polarity and microtubule dynamics regulation. Phosphorylates DCX, MAP2 and MAP4. Phosphorylates the microtubule-associated protein MAPT/TAU. Involved in cell polarity by phosphorylating the microtubule-associated proteins MAP2, MAP4 and MAPT/TAU at KXGS motifs, causing detachment from microtubules, and their disassembly. Involved in the regulation of neuronal migration through its dual activities in regulating cellular polarity and microtubule dynamics, possibly by phosphorylating and regulating DCX. Also acts as a positive regulator of the Wnt signaling pathway, probably by mediating phosphorylation of dishevelled proteins (DVL1, DVL2 and/or DVL3). This is Serine/threonine-protein kinase MARK1 from Mus musculus (Mouse).